We begin with the raw amino-acid sequence, 516 residues long: MELHITPALALLREHHLLDHVSNLTDFTATSVSYDSRKVKSGTLFFCKGNFLPKYLASAKEKGAIAYVAEKEYPEGEGLPAIIVNDEQKAMSLLGAAFYGYPQNDLFIIAITGTKGKTTTAYFADHILAQSTADHIALFSTLDRILGNKPEDKFKSDLTTPESLDLFHDMRVAVDNGMTHLVMEVSSQAYKKNRIYGLKYDVGIFLNISPDHIGRNEHPTFADYLHCKEQLLVNSAKCLINAETEKFTDVYYTAKATTQPEDIFLFARRGANIELPDNAQIDFEYRNDLEDLHESEFELTALTEKAKQLNLDGRYKTSVPGDYNEGNAVAAIIASGLAGASANDAVETLNHVHIRGRMEMINSNTHGTIYVDYAHNYASLKRLLAFLKRQTNAGKVTVVLGATGDKGISRRPGFGKALTEEQPDEVILTTDDPGFEDPMTIAREIDSYIDHDKVKHIQFEMDRETAIKKAIDGSENDDIVVLAGKGEDPYQKVNGEDVPYPTDVKIARDYINELER.

Serine 36 serves as a coordination point for UDP-N-acetyl-alpha-D-muramoyl-L-alanyl-D-glutamate. ATP is bound at residue 113 to 119 (GTKGKTT). UDP-N-acetyl-alpha-D-muramoyl-L-alanyl-D-glutamate contacts are provided by residues 159–160 (TT), serine 186, and arginine 194. Lysine 228 carries the post-translational modification N6-carboxylysine.

It belongs to the MurCDEF family. MurE subfamily. Post-translationally, carboxylation is probably crucial for Mg(2+) binding and, consequently, for the gamma-phosphate positioning of ATP.

It is found in the cytoplasm. It participates in cell wall biogenesis; peptidoglycan biosynthesis. In terms of biological role, catalyzes the addition of an amino acid to the nucleotide precursor UDP-N-acetylmuramoyl-L-alanyl-D-glutamate (UMAG) in the biosynthesis of bacterial cell-wall peptidoglycan. In Limosilactobacillus reuteri (strain DSM 20016) (Lactobacillus reuteri), this protein is UDP-N-acetylmuramyl-tripeptide synthetase.